A 273-amino-acid polypeptide reads, in one-letter code: Cell division protein ZipA (273 aa).

A topological domain (periplasmic) is located at residue M1. Residues 2-22 traverse the membrane as a helical segment; sequence DIGLREWLIVIGIIVIAGILF. The Cytoplasmic segment spans residues 23–273; sequence DGWRRMRGGK…ERRQMTIKQR (251 aa). The disordered stretch occupies residues 61–127; the sequence is VVNREHEPSL…DLQERPQKEQ (67 aa).

Belongs to the ZipA family. As to quaternary structure, interacts with FtsZ via their C-terminal domains.

It is found in the cell inner membrane. Essential cell division protein that stabilizes the FtsZ protofilaments by cross-linking them and that serves as a cytoplasmic membrane anchor for the Z ring. Also required for the recruitment to the septal ring of downstream cell division proteins. This is Cell division protein ZipA from Stutzerimonas stutzeri (strain A1501) (Pseudomonas stutzeri).